The sequence spans 288 residues: Mortality factor 4-like protein 2 (288 aa).

Residues Met1–Ser15 show a composition bias toward polar residues. Residues Met1–Glu113 form a disordered region. At Ser71 the chain carries Phosphoserine. The MRG domain occupies Asn117–Leu288.

As to quaternary structure, component of the NuA4 histone acetyltransferase complex which contains the catalytic subunit KAT5/TIP60 and the subunits EP400, TRRAP/PAF400, BRD8/SMAP, EPC1, DMAP1/DNMAP1, RUVBL1/TIP49, RUVBL2, ING3, actin, ACTL6A/BAF53A, MORF4L1/MRG15, MORF4L2/MRGX, MRGBP, YEATS4/GAS41 and VPS72/YL1. The NuA4 complex interacts with MYC and the adenovirus E1A protein. MORF4L1 may also participate in the formation of NuA4 related complexes which lack the KAT5/TIP60 catalytic subunit, but which include the SWI/SNF related protein SRCAP. Component of the MSIN3A histone deacetylase complex, which includes SIN3A, HDAC2, ARID4B, MORF4L1, RBBP4/RbAp48, and RBBP7/RbAp46. Interacts with MRFAP1 and RB1. May also interact with one or more as yet undefined members of the TLE (transducin-like enhancer of split) family of transcriptional repressors.

Its subcellular location is the nucleus. In terms of biological role, component of the NuA4 histone acetyltransferase complex which is involved in transcriptional activation of select genes principally by acetylation of nucleosomal histone H4 and H2A. This modification may both alter nucleosome - DNA interactions and promote interaction of the modified histones with other proteins which positively regulate transcription. This complex may be required for the activation of transcriptional programs associated with oncogene and proto-oncogene mediated growth induction, tumor suppressor mediated growth arrest and replicative senescence, apoptosis, and DNA repair. The NuA4 complex ATPase and helicase activities seem to be, at least in part, contributed by the association of RUVBL1 and RUVBL2 with EP400. NuA4 may also play a direct role in DNA repair when directly recruited to sites of DNA damage. Also a component of the MSIN3A complex which acts to repress transcription by deacetylation of nucleosomal histones. The polypeptide is Mortality factor 4-like protein 2 (MORF4L2) (Macaca fascicularis (Crab-eating macaque)).